The primary structure comprises 215 residues: Small ribosomal subunit protein uS2 (215 aa).

Belongs to the universal ribosomal protein uS2 family.

This is Small ribosomal subunit protein uS2 from Caldivirga maquilingensis (strain ATCC 700844 / DSM 13496 / JCM 10307 / IC-167).